We begin with the raw amino-acid sequence, 297 residues long: tRNA pseudouridine synthase B (297 aa).

Residue aspartate 44 is the Nucleophile of the active site.

Belongs to the pseudouridine synthase TruB family. Type 1 subfamily.

It carries out the reaction uridine(55) in tRNA = pseudouridine(55) in tRNA. In terms of biological role, responsible for synthesis of pseudouridine from uracil-55 in the psi GC loop of transfer RNAs. In Mycobacterium sp. (strain JLS), this protein is tRNA pseudouridine synthase B.